A 484-amino-acid chain; its full sequence is Transcription factor TGAL4 (484 aa).

The span at 1–11 shows a compositional bias: polar residues; sequence MGEASSSSGHP. 3 disordered regions span residues 1-22, 84-137, and 155-181; these read MGEA…GYGF, ATAA…NASS, and QQEQ…DPKT. Residues 123–137 are compositionally biased toward low complexity; that stretch reads SESSSKNNSNQNASS. The segment covering 163-173 has biased composition (polar residues); sequence ATNSPTHSSKT. Positions 178–222 constitute a bZIP domain; sequence DPKTMRRLAQNREAARKSRLRKKAYIQQLESSKLKLAQMEQDIHR. The interval 180-200 is basic motif; the sequence is KTMRRLAQNREAARKSRLRKK. A leucine-zipper region spans residues 206-220; the sequence is LESSKLKLAQMEQDI. A DOG1 domain is found at 241–455; sequence AAMFDVDYAR…RALSSLWASR (215 aa).

The protein belongs to the bZIP family. In terms of assembly, interacts with NPR1/NH1 and NPR3/NH3.

It localises to the nucleus. Transcriptional regulator involved in defense response. This chain is Transcription factor TGAL4, found in Oryza sativa subsp. japonica (Rice).